Reading from the N-terminus, the 160-residue chain is Cytochrome b6-f complex subunit 4 (160 aa).

The next 3 membrane-spanning stretches (helical) occupy residues 36–56 (LLYIFPVVILGTIACNVGLAV), 95–115 (LLGVLLMVSVPTGLLTVPFLE), and 131–151 (TVFLIGTAVALWLGIGATLPI).

It belongs to the cytochrome b family. PetD subfamily. In terms of assembly, the 4 large subunits of the cytochrome b6-f complex are cytochrome b6, subunit IV (17 kDa polypeptide, petD), cytochrome f and the Rieske protein, while the 4 small subunits are petG, petL, petM and petN. The complex functions as a dimer.

Its subcellular location is the plastid. It localises to the chloroplast thylakoid membrane. Component of the cytochrome b6-f complex, which mediates electron transfer between photosystem II (PSII) and photosystem I (PSI), cyclic electron flow around PSI, and state transitions. In Saccharum hybrid (Sugarcane), this protein is Cytochrome b6-f complex subunit 4.